Consider the following 184-residue polypeptide: MIKAIEGIITKKEPTNVWIKTLSGVSYGISISLFTSASLQKGEKVELFITQVIREDANLLYGFIKESEQRIFEMLLKVNGIGASTAMAVCSSLGPDEFSIAVMNGDDAVLRRVPGIGPKTARTLIAQLSDAKFGEINSMPSYQNEAFMALESLGFKRDRISKVLNECSSNDTASLIKEALKKLA.

The tract at residues 1 to 64 (MIKAIEGIIT…EDANLLYGFI (64 aa)) is domain I. Residues 65 to 137 (KESEQRIFEM…LSDAKFGEIN (73 aa)) are domain II. A region of interest (flexible linker) is located at residue N137. Positions 138-184 (SMPSYQNEAFMALESLGFKRDRISKVLNECSSNDTASLIKEALKKLA) are domain III.

The protein belongs to the RuvA family. As to quaternary structure, homotetramer. Forms an RuvA(8)-RuvB(12)-Holliday junction (HJ) complex. HJ DNA is sandwiched between 2 RuvA tetramers; dsDNA enters through RuvA and exits via RuvB. An RuvB hexamer assembles on each DNA strand where it exits the tetramer. Each RuvB hexamer is contacted by two RuvA subunits (via domain III) on 2 adjacent RuvB subunits; this complex drives branch migration. In the full resolvosome a probable DNA-RuvA(4)-RuvB(12)-RuvC(2) complex forms which resolves the HJ.

It localises to the cytoplasm. Functionally, the RuvA-RuvB-RuvC complex processes Holliday junction (HJ) DNA during genetic recombination and DNA repair, while the RuvA-RuvB complex plays an important role in the rescue of blocked DNA replication forks via replication fork reversal (RFR). RuvA specifically binds to HJ cruciform DNA, conferring on it an open structure. The RuvB hexamer acts as an ATP-dependent pump, pulling dsDNA into and through the RuvAB complex. HJ branch migration allows RuvC to scan DNA until it finds its consensus sequence, where it cleaves and resolves the cruciform DNA. This chain is Holliday junction branch migration complex subunit RuvA, found in Campylobacter fetus subsp. fetus (strain 82-40).